The sequence spans 158 residues: Small ribosomal subunit protein uS7 (158 aa).

The protein belongs to the universal ribosomal protein uS7 family. In terms of assembly, part of the 30S ribosomal subunit. Contacts proteins S9 and S11.

One of the primary rRNA binding proteins, it binds directly to 16S rRNA where it nucleates assembly of the head domain of the 30S subunit. Is located at the subunit interface close to the decoding center, probably blocks exit of the E-site tRNA. This Porphyromonas gingivalis (strain ATCC BAA-308 / W83) protein is Small ribosomal subunit protein uS7.